A 427-amino-acid polypeptide reads, in one-letter code: MSLQTLIEQATNPPESGSAASSPFSTDSFDASVMSTYGRFPLALERGAGCRVWDTQGKEYLDFVAGIATCTLGHAHPAMVEAVTRQIQKLHHVSNLYYIPEQGELAQWIIQHSCADRVFFCNSGAEANEAAIKLARKYAHTVLDIEKPIILTANASFHGRTLATITATGQAKYQKYFDPLVPGFHYVNYNDISAVEAAISELDEGDYRVAAILIEPLQGEGGVRPGDVEYFQKLRQICDDTGILLMFDEVQVGMGRSGKLWGYEYLGVEPDIFTSAKGLGGGIPIGAMMSKKFCDVFQPGEHASTFGGNPFACGVALAVCQTLERENILQNVQDRGEQLRSGLRAIAAKYPHHLTEVRGWGLINGLELAADIPLTAADVVKAAINEGLLLVPAGPKVVRFVPPLIVTEAEINTALKLLEKALATVTA.

The interval 1-23 (MSLQTLIEQATNPPESGSAASSP) is disordered. Pyridoxal 5'-phosphate contacts are provided by residues 124–125 (GA) and Phe157. Arg160 is a binding site for N(2)-acetyl-L-ornithine. 248–251 (DEVQ) lines the pyridoxal 5'-phosphate pocket. Lys277 is subject to N6-(pyridoxal phosphate)lysine. Ser304 is a binding site for N(2)-acetyl-L-ornithine. Thr305 contacts pyridoxal 5'-phosphate.

Belongs to the class-III pyridoxal-phosphate-dependent aminotransferase family. ArgD subfamily. As to quaternary structure, homodimer. Requires pyridoxal 5'-phosphate as cofactor.

The protein resides in the cytoplasm. It catalyses the reaction N(2)-acetyl-L-ornithine + 2-oxoglutarate = N-acetyl-L-glutamate 5-semialdehyde + L-glutamate. It functions in the pathway amino-acid biosynthesis; L-arginine biosynthesis; N(2)-acetyl-L-ornithine from L-glutamate: step 4/4. The sequence is that of Acetylornithine aminotransferase from Nostoc sp. (strain PCC 7120 / SAG 25.82 / UTEX 2576).